Reading from the N-terminus, the 271-residue chain is Dehydrodolichyl diphosphate synthase 7 (271 aa).

Residues 24–41 (FLFRVLCVGPIPTNISFI) form a helical membrane-spanning segment.

The protein belongs to the UPP synthase family. Mg(2+) serves as cofactor.

The protein resides in the endoplasmic reticulum membrane. Its pathway is protein modification; protein glycosylation. Its function is as follows. Catalyzes cis-prenyl chain elongation to produce the polyprenyl backbone of dolichol, a glycosyl carrier-lipid required for the biosynthesis of several classes of glycoprotein. The sequence is that of Dehydrodolichyl diphosphate synthase 7 from Arabidopsis thaliana (Mouse-ear cress).